We begin with the raw amino-acid sequence, 449 residues long: Mitochondrial distribution and morphology protein 10 (449 aa).

Disordered stretches follow at residues Gly-215 to Asp-244 and Asp-282 to Ser-307. Over residues Pro-285–Leu-301 the composition is skewed to low complexity.

Belongs to the MDM10 family. In terms of assembly, component of the ER-mitochondria encounter structure (ERMES) or MDM complex, composed of MMM1, MDM10, MDM12 and MDM34. Associates with the mitochondrial outer membrane sorting assembly machinery SAM(core) complex.

Its subcellular location is the mitochondrion outer membrane. Component of the ERMES/MDM complex, which serves as a molecular tether to connect the endoplasmic reticulum and mitochondria. Components of this complex are involved in the control of mitochondrial shape and protein biogenesis and may function in phospholipid exchange. MDM10 is involved in the late assembly steps of the general translocase of the mitochondrial outer membrane (TOM complex). Functions in the TOM40-specific route of the assembly of outer membrane beta-barrel proteins, including the association of TOM40 with the receptor TOM22 and small TOM proteins. Can associate with the SAM(core) complex as well as the MDM12-MMM1 complex, both involved in late steps of the major beta-barrel assembly pathway, that is responsible for biogenesis of all outer membrane beta-barrel proteins. May act as a switch that shuttles between both complexes and channels precursor proteins into the TOM40-specific pathway. Plays a role in mitochondrial morphology and in the inheritance of mitochondria. The polypeptide is Mitochondrial distribution and morphology protein 10 (Postia placenta (strain ATCC 44394 / Madison 698-R) (Brown rot fungus)).